The sequence spans 684 residues: Protein-glutamine gamma-glutamyltransferase 4 (684 aa).

Active-site residues include cysteine 268, histidine 327, and aspartate 350. Positions 390, 392, 442, and 447 each coordinate Ca(2+).

This sequence belongs to the transglutaminase superfamily. Transglutaminase family. In terms of assembly, homodimer. The cofactor is Ca(2+). Prostate.

The enzyme catalyses L-glutaminyl-[protein] + L-lysyl-[protein] = [protein]-L-lysyl-N(6)-5-L-glutamyl-[protein] + NH4(+). Its function is as follows. Associated with the mammalian reproductive process. Catalyzes the cross-linking of proteins and the conjugation of polyamines to specific proteins in the seminal tract. The chain is Protein-glutamine gamma-glutamyltransferase 4 (TGM4) from Homo sapiens (Human).